The following is a 292-amino-acid chain: Protease HtpX homolog (292 aa).

The next 2 membrane-spanning stretches (helical) occupy residues 4–24 and 39–59; these read ILLF…VASL and GALL…SLLI. Histidine 144 serves as a coordination point for Zn(2+). Residue glutamate 145 is part of the active site. Histidine 148 is a binding site for Zn(2+). Transmembrane regions (helical) follow at residues 159-179 and 199-219; these read LIQG…GYAV and VTTI…VAWF. Glutamate 224 is a binding site for Zn(2+).

The protein belongs to the peptidase M48B family. It depends on Zn(2+) as a cofactor.

Its subcellular location is the cell inner membrane. This Verminephrobacter eiseniae (strain EF01-2) protein is Protease HtpX homolog.